The chain runs to 197 residues: Nucleoside triphosphate pyrophosphatase (197 aa).

Residue D71 is the Proton acceptor of the active site.

This sequence belongs to the Maf family. Requires a divalent metal cation as cofactor.

It is found in the cytoplasm. The catalysed reaction is a ribonucleoside 5'-triphosphate + H2O = a ribonucleoside 5'-phosphate + diphosphate + H(+). It catalyses the reaction a 2'-deoxyribonucleoside 5'-triphosphate + H2O = a 2'-deoxyribonucleoside 5'-phosphate + diphosphate + H(+). In terms of biological role, nucleoside triphosphate pyrophosphatase. May have a dual role in cell division arrest and in preventing the incorporation of modified nucleotides into cellular nucleic acids. The chain is Nucleoside triphosphate pyrophosphatase from Synechococcus sp. (strain JA-2-3B'a(2-13)) (Cyanobacteria bacterium Yellowstone B-Prime).